Reading from the N-terminus, the 482-residue chain is Ras GTPase-activating protein-binding protein 2 (482 aa).

The region spanning 11-133 is the NTF2 domain; the sequence is VGREFVRQYY…FYVHNDMFRY (123 aa). Residues 140 to 158 are compositionally biased toward acidic residues; sequence DSEPELDEESEDEVEEEQE. Disordered regions lie at residues 140–170 and 187–318; these read DSEPELDEESEDEVEEEQEDRQPSPEPVQEN and EPLE…EQND. A phosphoserine mark is found at Ser-141, Ser-149, and Ser-225. The tract at residues 142 to 220 is acidic disordered region; sequence EPELDEESED…PQVEEKHLEE (79 aa). Over residues 191 to 225 the composition is skewed to basic and acidic residues; sequence ESSHEPEPEPESETKTEELKPQVEEKHLEELEEKS. Thr-227 is subject to Phosphothreonine. The segment covering 247-264 has biased composition (polar residues); that stretch reads ASVTSKNLPPSGTVSSSG. Residue Lys-281 forms a Glycyl lysine isopeptide (Lys-Gly) (interchain with G-Cter in SUMO2) linkage. Over residues 290-300 the composition is skewed to basic and acidic residues; sequence RVREQRPRERP. The 79-residue stretch at 331 to 409 folds into the RRM domain; that stretch reads HQLFVGNLPH…VRLNVEEKKT (79 aa). Lys-392 bears the N6-succinyllysine mark. The RG-rich region stretch occupies residues 404–476; the sequence is VEEKKTRAAR…GRGTGQMEGR (73 aa). Positions 408 to 432 are enriched in basic and acidic residues; sequence KTRAARERETRGGGDDRRDIRRNDR. Residues 408–482 are disordered; it reads KTRAARERET…MEGRFTGQRR (75 aa). Residues 433 to 445 show a composition bias toward gly residues; sequence GPGGPRGIVGGGM. Arg-457 is subject to Omega-N-methylarginine. At Ser-466 the chain carries Phosphoserine. Arg-468 is modified (omega-N-methylarginine).

Forms homooligomers. Forms heterodimers with G3BP1. Interacts with NFKBIA (via N-terminus). Interacts (via NTF2 domain) with USP10; inhibiting stress granule formation. Interacts (via NTF2 domain) with CAPRIN1; promoting stress granule formation. Associates (via RG-rich region) with 40S ribosome subunits. Interacts with PABPC1.

Its subcellular location is the cytoplasm. The protein localises to the stress granule. With respect to regulation, under physiological conditions, G3BP2 adopts a compact state that is stabilized by intramolecular interactions between the RG-rich and the acidic regions that inhibit phase separation. Upon stress, polysomes disassemble and mRNAs are released in an unfolded protein-free state. Binding of unfolded mRNA to G3BP2 outcompetes the intramolecular interactions and RNA-bound G3BP2 adopts an expanded conformation in which the RG-rich region becomes exposed to engage in protein-protein and protein-RNA interactions, allowing physical cross-linking of RNA molecules to form protein-RNA condensates, leading to liquid-liquid phase separation (LLPS). In terms of biological role, scaffold protein that plays an essential role in cytoplasmic stress granule formation which acts as a platform for antiviral signaling. Plays an essential role in stress granule formation. Stress granules are membraneless compartments that store mRNAs and proteins, such as stalled translation pre-initiation complexes, in response to stress. Promotes formation of stress granules phase-separated membraneless compartment by undergoing liquid-liquid phase separation (LLPS) upon unfolded RNA-binding: functions as a molecular switch that triggers RNA-dependent LLPS in response to a rise in intracellular free RNA concentrations. This Mus musculus (Mouse) protein is Ras GTPase-activating protein-binding protein 2 (G3bp2).